Consider the following 648-residue polypeptide: Cell surface glycoprotein MUC18 (648 aa).

The signal sequence occupies residues 1-23 (MGLPRLVCAFLFAACCCCRSATG). Ig-like V-type domains are found at residues 24 to 131 (VPGE…HYVQ) and 141 to 244 (PTIQ…KEVT). Topologically, residues 24–560 (VPGEEKQPTP…EKKLPQQESK (537 aa)) are extracellular. Disulfide bonds link cysteine 50/cysteine 118, cysteine 163/cysteine 225, cysteine 274/cysteine 322, cysteine 367/cysteine 409, and cysteine 454/cysteine 501. N-linked (GlcNAc...) asparagine glycosylation is present at asparagine 58. Ig-like C2-type domains lie at 246–332 (PVLY…TTVM), 337–426 (PLEL…RRVS), and 432–512 (SPWM…SNTT). The segment at 282 to 304 (PHFTINKKNPSTEEMEEESTDEN) is disordered. A glycan (N-linked (GlcNAc...) asparagine) is linked at asparagine 510. Residues 527-549 (DSSQTTGLSTPTVSPHSRANSTS) are compositionally biased toward polar residues. The interval 527 to 554 (DSSQTTGLSTPTVSPHSRANSTSTEKKL) is disordered. Residues 561 to 581 (GVVIVAVIVCTLVLAVLGATL) form a helical membrane-spanning segment. Topologically, residues 582–648 (YYFYKKGKLP…QGEKYIDLRH (67 aa)) are cytoplasmic. Phosphoserine occurs at positions 608 and 616. The segment at 626-648 (LQGSNGDKRAPGDQGEKYIDLRH) is disordered. The segment covering 631–648 (GDKRAPGDQGEKYIDLRH) has biased composition (basic and acidic residues).

In terms of tissue distribution, detected in lung, uterus and placenta (at protein level). Detected in heart, lung, kidney, adrenal gland, intestine, testis, skeletal muscle and aorta. Detected at low levels in adult brain, in particular in brain stem and spinal cord, but also in hippocampus, olfactory bulb and striatum (at protein level).

The protein localises to the cell membrane. The protein resides in the perikaryon. Plays a role in cell adhesion, and in cohesion of the endothelial monolayer at intercellular junctions in vascular tissue. Its expression may allow melanoma cells to interact with cellular elements of the vascular system, thereby enhancing hematogeneous tumor spread. Could be an adhesion molecule active in neural crest cells during embryonic development. Acts as a surface receptor that triggers tyrosine phosphorylation of FYN and PTK2/FAK1, and a transient increase in the intracellular calcium concentration. The chain is Cell surface glycoprotein MUC18 (Mcam) from Rattus norvegicus (Rat).